The sequence spans 115 residues: Nucleoid-associated protein Rpic_1036 (115 aa).

Belongs to the YbaB/EbfC family. As to quaternary structure, homodimer.

It is found in the cytoplasm. The protein localises to the nucleoid. Binds to DNA and alters its conformation. May be involved in regulation of gene expression, nucleoid organization and DNA protection. The polypeptide is Nucleoid-associated protein Rpic_1036 (Ralstonia pickettii (strain 12J)).